The primary structure comprises 212 residues: Leucyl/phenylalanyl-tRNA--protein transferase (212 aa).

Belongs to the L/F-transferase family.

It localises to the cytoplasm. It carries out the reaction N-terminal L-lysyl-[protein] + L-leucyl-tRNA(Leu) = N-terminal L-leucyl-L-lysyl-[protein] + tRNA(Leu) + H(+). It catalyses the reaction N-terminal L-arginyl-[protein] + L-leucyl-tRNA(Leu) = N-terminal L-leucyl-L-arginyl-[protein] + tRNA(Leu) + H(+). The enzyme catalyses L-phenylalanyl-tRNA(Phe) + an N-terminal L-alpha-aminoacyl-[protein] = an N-terminal L-phenylalanyl-L-alpha-aminoacyl-[protein] + tRNA(Phe). Functionally, functions in the N-end rule pathway of protein degradation where it conjugates Leu, Phe and, less efficiently, Met from aminoacyl-tRNAs to the N-termini of proteins containing an N-terminal arginine or lysine. The polypeptide is Leucyl/phenylalanyl-tRNA--protein transferase (Flavobacterium johnsoniae (strain ATCC 17061 / DSM 2064 / JCM 8514 / BCRC 14874 / CCUG 350202 / NBRC 14942 / NCIMB 11054 / UW101) (Cytophaga johnsonae)).